Consider the following 218-residue polypeptide: NAD(P)H-quinone oxidoreductase subunit I (218 aa).

2 4Fe-4S ferredoxin-type domains span residues 55–84 (GRIH…VDWV) and 95–124 (RNYS…MTEE). Cysteine 64, cysteine 67, cysteine 70, cysteine 74, cysteine 104, cysteine 107, cysteine 110, and cysteine 114 together coordinate [4Fe-4S] cluster. The segment at 168-218 (EVQPHGVDPSRPRAGQRPDQVLSSLKQNAGGSAGNEGESATSTNTSKGSAE) is disordered. A compositionally biased stretch (polar residues) spans 208–218 (TSTNTSKGSAE).

This sequence belongs to the complex I 23 kDa subunit family. In terms of assembly, NDH-1 is composed of at least 11 different subunits. [4Fe-4S] cluster is required as a cofactor.

It localises to the cellular thylakoid membrane. It carries out the reaction a plastoquinone + NADH + (n+1) H(+)(in) = a plastoquinol + NAD(+) + n H(+)(out). The catalysed reaction is a plastoquinone + NADPH + (n+1) H(+)(in) = a plastoquinol + NADP(+) + n H(+)(out). NDH-1 shuttles electrons from an unknown electron donor, via FMN and iron-sulfur (Fe-S) centers, to quinones in the respiratory and/or the photosynthetic chain. The immediate electron acceptor for the enzyme in this species is believed to be plastoquinone. Couples the redox reaction to proton translocation, and thus conserves the redox energy in a proton gradient. In Synechococcus sp. (strain WH7803), this protein is NAD(P)H-quinone oxidoreductase subunit I.